Consider the following 224-residue polypeptide: Probable proteasome subunit beta type-4 (224 aa).

The protein belongs to the peptidase T1B family. In terms of assembly, the 26S proteasome consists of a 20S proteasome core and two 19S regulatory subunits. The 20S proteasome core is composed of 28 subunits that are arranged in four stacked rings, resulting in a barrel-shaped structure. The two end rings are each formed by seven alpha subunits, and the two central rings are each formed by seven beta subunits. The catalytic chamber with the active sites is on the inside of the barrel.

The protein localises to the cytoplasm. It is found in the nucleus. In terms of biological role, non-catalytic component of the proteasome, a multicatalytic proteinase complex which is characterized by its ability to cleave peptides with Arg, Phe, Tyr, Leu, and Glu adjacent to the leaving group at neutral or slightly basic pH. The proteasome has an ATP-dependent proteolytic activity. The sequence is that of Probable proteasome subunit beta type-4 (CPR1) from Cryptococcus neoformans var. neoformans serotype D (strain B-3501A) (Filobasidiella neoformans).